The sequence spans 77 residues: Small ribosomal subunit protein bS20 (77 aa).

Belongs to the bacterial ribosomal protein bS20 family.

Its function is as follows. Binds directly to 16S ribosomal RNA. The protein is Small ribosomal subunit protein bS20 of Streptococcus agalactiae serotype Ia (strain ATCC 27591 / A909 / CDC SS700).